A 278-amino-acid polypeptide reads, in one-letter code: Esterase dbaE (278 aa).

Residues S124, D220, and H248 each act as charge relay system in the active site.

Belongs to the LovG family.

The protein operates within secondary metabolite biosynthesis. Functionally, esterase; part of the gene cluster that mediates the biosynthesis of the antibiotic 2,4-dihydroxy-3-methyl-6-(2-oxopropyl)benzaldehyde (DHMBA) and its derivatives. The direct non-reducing polyketide synthase dbaI product is 2,4-dihydroxy-3-methyl-6-(2-oxopropyl)benzaldehyde (DHMBA), produced by condensation of one acetyl-CoA starter unit with 4 malonyl-CoA units and one methylation step. The FAD-dependent monooxygenase dbaH is responsible for the synthesis of yellow pigments derived from the oxidation of DHMBA. The roles of dbaB, C, E and F have still to be determined. The sequence is that of Esterase dbaE from Emericella nidulans (strain FGSC A4 / ATCC 38163 / CBS 112.46 / NRRL 194 / M139) (Aspergillus nidulans).